The primary structure comprises 207 residues: Guanylate kinase (207 aa).

One can recognise a Guanylate kinase-like domain in the interval 3–181; it reads GQLFVICGPS…AVEMVVSIVR (179 aa). ATP is bound at residue 10–17; that stretch reads GPSGAGKT.

It belongs to the guanylate kinase family.

The protein localises to the cytoplasm. The catalysed reaction is GMP + ATP = GDP + ADP. Its function is as follows. Essential for recycling GMP and indirectly, cGMP. The protein is Guanylate kinase (gmk) of Thermotoga maritima (strain ATCC 43589 / DSM 3109 / JCM 10099 / NBRC 100826 / MSB8).